We begin with the raw amino-acid sequence, 182 residues long: Dual-action ribosomal maturation protein DarP (182 aa).

The interval 1 to 20 (MNKQPEEWQDPQSLQQQDDE) is disordered.

It belongs to the DarP family.

The protein resides in the cytoplasm. Its function is as follows. Member of a network of 50S ribosomal subunit biogenesis factors which assembles along the 30S-50S interface, preventing incorrect 23S rRNA structures from forming. Promotes peptidyl transferase center (PTC) maturation. The chain is Dual-action ribosomal maturation protein DarP from Sodalis glossinidius (strain morsitans).